We begin with the raw amino-acid sequence, 182 residues long: ATP-dependent protease subunit HslV (182 aa).

The active site involves Thr2. 3 residues coordinate Na(+): Gly157, Cys160, and Thr163.

The protein belongs to the peptidase T1B family. HslV subfamily. As to quaternary structure, a double ring-shaped homohexamer of HslV is capped on each side by a ring-shaped HslU homohexamer. The assembly of the HslU/HslV complex is dependent on binding of ATP.

The protein resides in the cytoplasm. It carries out the reaction ATP-dependent cleavage of peptide bonds with broad specificity.. Its activity is regulated as follows. Allosterically activated by HslU binding. In terms of biological role, protease subunit of a proteasome-like degradation complex believed to be a general protein degrading machinery. This chain is ATP-dependent protease subunit HslV, found in Vibrio atlanticus (strain LGP32) (Vibrio splendidus (strain Mel32)).